A 258-amino-acid polypeptide reads, in one-letter code: Imidazole glycerol phosphate synthase subunit HisF (258 aa).

Residues Asp11 and Asp130 contribute to the active site.

It belongs to the HisA/HisF family. Heterodimer of HisH and HisF.

Its subcellular location is the cytoplasm. The catalysed reaction is 5-[(5-phospho-1-deoxy-D-ribulos-1-ylimino)methylamino]-1-(5-phospho-beta-D-ribosyl)imidazole-4-carboxamide + L-glutamine = D-erythro-1-(imidazol-4-yl)glycerol 3-phosphate + 5-amino-1-(5-phospho-beta-D-ribosyl)imidazole-4-carboxamide + L-glutamate + H(+). Its pathway is amino-acid biosynthesis; L-histidine biosynthesis; L-histidine from 5-phospho-alpha-D-ribose 1-diphosphate: step 5/9. Its function is as follows. IGPS catalyzes the conversion of PRFAR and glutamine to IGP, AICAR and glutamate. The HisF subunit catalyzes the cyclization activity that produces IGP and AICAR from PRFAR using the ammonia provided by the HisH subunit. The chain is Imidazole glycerol phosphate synthase subunit HisF from Buchnera aphidicola subsp. Baizongia pistaciae (strain Bp).